A 404-amino-acid chain; its full sequence is Protrudin (404 aa).

The segment at 1 to 20 (MQTSEREGCGPEVSPSTVPE) is disordered. The Cytoplasmic segment spans residues 1-66 (MQTSEREGCG…AGDGVRYLLR (66 aa)). Residues 1–92 (MQTSEREGCG…LFLTLNEGAW (92 aa)) are sufficient for homooligomerization. A sufficient for localization to endoplasmic reticulum tubular network and for interactions with REEP1, REEP5, ATL1, ATL2, ATL3 and SPAST region spans residues 1–205 (MQTSEREGCG…LYLLPLCWVL (205 aa)). The segment at 51–64 (LEPLKDAGDGVRYL) is necessary for interaction with RAB11A and function in neurite outgrowth. The chain crosses the membrane as a helical span at residues 67 to 87 (WQTPLCSLLTCLGLNVLFLTL). Position 88 (Asn88) is a topological domain, lumenal. The chain crosses the membrane as a helical span at residues 89 to 109 (EGAWYSVGALMISVPALLGYL). Over 110-187 (QEGCQARLSE…NPAVSSQFYG (78 aa)) the chain is Cytoplasmic. Residues 188 to 208 (ALLGTVCMLYLLPLCWVLALL) constitute an intramembrane region (helical). At 209–404 (NSTLFLGNVE…CASCNQTLSK (196 aa)) the chain is on the cytoplasmic side. The tract at residues 234-286 (MNPKQEESAFESPPPSDAGGKGALVDCTPAPTPTEDLTPGSVEEAEEAEPDEE) is disordered. Residues 271 to 354 (TPGSVEEAEE…GCSATFSVLK (84 aa)) form a necessary for interaction with KIF5A region. Acidic residues predominate over residues 276-286 (EEAEEAEPDEE). Residues 286–292 (EFKDAIE) form a necessary for interaction with VAPA region. The segment at 337–403 (TNNYGSCTGC…VCASCNQTLS (67 aa)) adopts an FYVE-type zinc-finger fold. Zn(2+)-binding residues include Cys343, Cys346, Cys359, Cys362, Cys367, Cys370, Cys395, and Cys398.

As to quaternary structure, can form homooligomers (monomers, dimers and tetramers). Interacts with RAB11A (GDP-bound form); regulates RAB11A. Interacts with FKBP8; may negatively regulate ZFYVE27 phosphorylation. Interacts with VAPA (via MSP domain); may regulate ZFYVE27 retention in the endoplasmic reticulum and its function in cell projections formation. Interacts with VAPB (via MSP domain). Interacts with RAB11B (GDP-bound form), REEP1, REEP5, ATL1, ATL2, ATL3, SPAST, SURF4, KIF5A, KIF5B, KIF5C and RTN3. In terms of processing, phosphorylated. Phosphorylation is induced by NGF through the MAPK/ERK pathway and modulates interaction with RAB11A.

The protein resides in the recycling endosome membrane. It localises to the endoplasmic reticulum membrane. The protein localises to the cell projection. Its subcellular location is the growth cone membrane. Key regulator of RAB11-dependent vesicular trafficking during neurite extension through polarized membrane transport. Promotes axonal elongation and contributes to the establishment of neuronal cell polarity. Involved in nerve growth factor-induced neurite formation in VAPA-dependent manner. Contributes to both the formation and stabilization of the tubular ER network. Involved in ER morphogenesis by regulating the sheet-to-tubule balance and possibly the density of tubule interconnections. Acts as an adapter protein that facilitates the interaction of KIF5A with VAPA, VAPB, SURF4, RAB11A, RAB11B and RTN3 and the ZFYVE27-KIF5A complex contributes to the transport of these proteins in neurons. Can induce formation of neurite-like membrane protrusions in non-neuronal cells in a KIF5A/B-dependent manner. This is Protrudin (ZFYVE27) from Bos taurus (Bovine).